The chain runs to 341 residues: N-acetyl-gamma-glutamyl-phosphate reductase (341 aa).

Cys147 is a catalytic residue.

This sequence belongs to the NAGSA dehydrogenase family. Type 1 subfamily.

Its subcellular location is the cytoplasm. The catalysed reaction is N-acetyl-L-glutamate 5-semialdehyde + phosphate + NADP(+) = N-acetyl-L-glutamyl 5-phosphate + NADPH + H(+). It participates in amino-acid biosynthesis; L-arginine biosynthesis; N(2)-acetyl-L-ornithine from L-glutamate: step 3/4. Its function is as follows. Catalyzes the NADPH-dependent reduction of N-acetyl-5-glutamyl phosphate to yield N-acetyl-L-glutamate 5-semialdehyde. This Staphylococcus epidermidis (strain ATCC 35984 / DSM 28319 / BCRC 17069 / CCUG 31568 / BM 3577 / RP62A) protein is N-acetyl-gamma-glutamyl-phosphate reductase.